The chain runs to 66 residues: Photosystem II reaction center protein J (66 aa).

A helical transmembrane segment spans residues 37-57 (LWLVATAGGMAVLFVVGLFFY).

This sequence belongs to the PsbJ family. In terms of assembly, PSII is composed of 1 copy each of membrane proteins PsbA, PsbB, PsbC, PsbD, PsbE, PsbF, PsbH, PsbI, PsbJ, PsbK, PsbL, PsbM, PsbT, PsbX, PsbY, PsbZ, Psb30/Ycf12, peripheral proteins PsbO, CyanoQ (PsbQ), PsbU, PsbV and a large number of cofactors. It forms dimeric complexes.

It localises to the cellular thylakoid membrane. One of the components of the core complex of photosystem II (PSII). PSII is a light-driven water:plastoquinone oxidoreductase that uses light energy to abstract electrons from H(2)O, generating O(2) and a proton gradient subsequently used for ATP formation. It consists of a core antenna complex that captures photons, and an electron transfer chain that converts photonic excitation into a charge separation. The sequence is that of Photosystem II reaction center protein J from Synechococcus sp. (strain WH7803).